The primary structure comprises 122 residues: Large ribosomal subunit protein uL14 (122 aa).

Belongs to the universal ribosomal protein uL14 family. As to quaternary structure, part of the 50S ribosomal subunit. Forms a cluster with proteins L3 and L19. In the 70S ribosome, L14 and L19 interact and together make contacts with the 16S rRNA in bridges B5 and B8.

In terms of biological role, binds to 23S rRNA. Forms part of two intersubunit bridges in the 70S ribosome. This Chlamydia abortus (strain DSM 27085 / S26/3) (Chlamydophila abortus) protein is Large ribosomal subunit protein uL14.